The chain runs to 607 residues: MPRKKPFSVKQKKKQLQDKRERKRGLQDGLRSSSNSRSGSRERREEQTDTSDGESVTHHIRRLNQQPSQGLGPRGYDPNRYRLHFERDSREEVERRKRAAREQVLQPVSAEVLELDIREVYQPGSVLDFPRRPPWSYEMSKEQLMSQEERSFQEYLGKIHGAYSSEKLSYFEHNLETWRQLWRVLEMSDIVLLITDIRHPVVNFPPALYEYVTGELGLALVLVLNKVDLAPPALVVAWKHYFHQHYPQLHVVLFTSFPRDPRTPQDPSSVLKKSRRRGRGWTRALGPEQLLRACEAITVGKVDLSSWREKIARDVAGATWGNGSGEEEEEEDGPAVLVEQQTDSAMEPTGPTRERYKDGVVTIGCVGFPNVGKSSLINGLVGRKVVSVSRTPGHTRYFQTYFLTPSVKLCDCPGLIFPSLLPRQLQVLAGIYPIAQIQEPYTAVGYLASRIPVQALLHLRHPEAEDPSAEHPWCAWDICEAWAEKRGYKTAKAARNDVYRAANSLLRLAVDGRLSLCFHPPGYSEQKGTWESHPETTELVVLQGRVGPAGDEEEEEEEELSSSCEEEGEEDRDADEEGEGDEDTPTSAPGSSLAGRNPYALLGEDEC.

The segment covering 1-14 (MPRKKPFSVKQKKK) has biased composition (basic residues). The tract at residues 1–81 (MPRKKPFSVK…GPRGYDPNRY (81 aa)) is disordered. The segment covering 15–26 (QLQDKRERKRGL) has biased composition (basic and acidic residues). Phosphoserine is present on residues Ser32, Ser33, and Ser34. Residues Thr48 and Thr50 each carry the phosphothreonine modification. Phosphoserine is present on residues Ser51 and Ser68. The CP-type G domain maps to 178–418 (WRQLWRVLEM…LCDCPGLIFP (241 aa)). A GTP-binding site is contributed by 225–228 (NKVD). Ser324 carries the phosphoserine modification. GTP is bound by residues 367–374 (GFPNVGKS) and 411–415 (DCPGL). The segment at 547–607 (GPAGDEEEEE…PYALLGEDEC (61 aa)) is disordered. The span at 550 to 584 (GDEEEEEEEELSSSCEEEGEEDRDADEEGEGDEDT) shows a compositional bias: acidic residues. Phosphoserine occurs at positions 561, 562, and 563.

This sequence belongs to the TRAFAC class YlqF/YawG GTPase family.

Its function is as follows. Possible regulatory or functional link with the histocompatibility cluster. The protein is Guanine nucleotide-binding protein-like 1 (GNL1) of Pongo abelii (Sumatran orangutan).